The primary structure comprises 135 residues: MASLKDLEGKWRLMESHGFEEYMKELGVGLALRKMAAMAKPDCIITCDGNNITVKTESTVKTTVFSCNLGEKFDETTADGRKTETVCTFQDGALVQHQQWDGKESTITRKLKDGKMIVECVMNNATCTRVYEKVQ.

Ala-2 bears the N-acetylalanine mark. The residue at position 3 (Ser-3) is a Phosphoserine. The short motif at 24–34 is the Nuclear localization signal element; the sequence is KELGVGLALRK. 1-eicosanoylglycerol contacts are provided by Cys-43, Thr-56, and Arg-109. A disulfide bridge connects residues Cys-120 and Cys-127. A 1-eicosanoylglycerol-binding site is contributed by 129–131; sequence RVY. (9Z,12Z)-octadecadienoate is bound at residue 129–131; the sequence is RVY. Tyr-131 lines the hexadecanoate pocket. Position 131 (Tyr-131) interacts with N-eicosanoyl ethanolamine. Tyr-131 is subject to Phosphotyrosine.

This sequence belongs to the calycin superfamily. Fatty-acid binding protein (FABP) family. As to quaternary structure, monomer. In terms of tissue distribution, widely expressed.

Its subcellular location is the cytoplasm. It is found in the nucleus. It localises to the synapse. The protein resides in the postsynaptic density. The protein localises to the secreted. The catalysed reaction is hexadecanoate(out) = hexadecanoate(in). It catalyses the reaction (9Z,12Z)-octadecadienoate(out) = (9Z,12Z)-octadecadienoate(in). It carries out the reaction (9Z)-octadecenoate(out) = (9Z)-octadecenoate(in). Functionally, intracellular carrier for long-chain fatty acids and related active lipids, such as endocannabinoids, that regulate the metabolism and actions of the ligands they bind. In addition to the cytosolic transport, selectively delivers specific fatty acids from the cytosol to the nucleus, wherein they activate nuclear receptors. Delivers retinoic acid to the nuclear receptor peroxisome proliferator-activated receptor delta; which promotes proliferation and survival. May also serve as a synaptic carrier of endocannabinoid at central synapses and thus controls retrograde endocannabinoid signaling. Modulates inflammation by regulating PTGES induction via NF-kappa-B activation, and prostaglandin E2 (PGE2) biosynthesis during inflammation. May be involved in keratinocyte differentiation. The sequence is that of Fatty acid-binding protein 5 from Mus musculus (Mouse).